Reading from the N-terminus, the 119-residue chain is Holo-[acyl-carrier-protein] synthase (119 aa).

Residues Asp8 and Glu50 each coordinate Mg(2+).

It belongs to the P-Pant transferase superfamily. AcpS family. Mg(2+) is required as a cofactor.

The protein localises to the cytoplasm. The enzyme catalyses apo-[ACP] + CoA = holo-[ACP] + adenosine 3',5'-bisphosphate + H(+). In terms of biological role, transfers the 4'-phosphopantetheine moiety from coenzyme A to a Ser of acyl-carrier-protein. The protein is Holo-[acyl-carrier-protein] synthase of Clavibacter michiganensis subsp. michiganensis (strain NCPPB 382).